The following is an 840-amino-acid chain: Protein translocase subunit SecA (840 aa).

ATP-binding positions include glutamine 85, 103 to 107 (GEGKT), and aspartate 492. The disordered stretch occupies residues 787-821 (QRERVAKETGASHGGDSQEIKKKPVKKEPKVGRND). Over residues 802–819 (DSQEIKKKPVKKEPKVGR) the composition is skewed to basic and acidic residues. Zn(2+) contacts are provided by cysteine 823, cysteine 825, cysteine 834, and cysteine 835.

The protein belongs to the SecA family. Monomer and homodimer. Part of the essential Sec protein translocation apparatus which comprises SecA, SecYEG and auxiliary proteins SecDF. Other proteins may also be involved. It depends on Zn(2+) as a cofactor.

Its subcellular location is the cell membrane. The protein localises to the cytoplasm. The catalysed reaction is ATP + H2O + cellular proteinSide 1 = ADP + phosphate + cellular proteinSide 2.. Its function is as follows. Part of the Sec protein translocase complex. Interacts with the SecYEG preprotein conducting channel. Has a central role in coupling the hydrolysis of ATP to the transfer of proteins into and across the cell membrane, serving as an ATP-driven molecular motor driving the stepwise translocation of polypeptide chains across the membrane. This chain is Protein translocase subunit SecA, found in Clostridium perfringens (strain 13 / Type A).